A 232-amino-acid polypeptide reads, in one-letter code: Chromosome partition protein MukE (232 aa).

Positions 203–232 (HTKEPSQGSLLSEEDQEEQAQEEMTEEGEA) are disordered. Acidic residues predominate over residues 214 to 232 (SEEDQEEQAQEEMTEEGEA).

The protein belongs to the MukE family. Interacts, and probably forms a ternary complex, with MukF and MukB. The complex formation is stimulated by calcium or magnesium.

Its subcellular location is the cytoplasm. The protein localises to the nucleoid. In terms of biological role, involved in chromosome condensation, segregation and cell cycle progression. May participate in facilitating chromosome segregation by condensation DNA from both sides of a centrally located replisome during cell division. Probably acts via its interaction with MukB and MukF. This chain is Chromosome partition protein MukE, found in Vibrio parahaemolyticus serotype O3:K6 (strain RIMD 2210633).